The following is a 148-amino-acid chain: MKPRSKRLLLVAGAVALLVGAVALVLNAFQQNLVFFHTPTEVAEGKAPVGRAFRIGGMVETGSIRRAADGVTVQFAITDTAKVIPVSYKGSLPDLFSEGKGAVVQGTLGPDGQFQASEVLAKHDENYMPPEAQHAVDQAQKAAQTVQQ.

Residues 1–7 (MKPRSKR) are Cytoplasmic-facing. A helical; Signal-anchor for type II membrane protein membrane pass occupies residues 8 to 28 (LLLVAGAVALLVGAVALVLNA). Over 29–148 (FQQNLVFFHT…AQKAAQTVQQ (120 aa)) the chain is Periplasmic. Residues His-123 and Tyr-127 each coordinate heme.

Belongs to the CcmE/CycJ family.

Its subcellular location is the cell inner membrane. In terms of biological role, heme chaperone required for the biogenesis of c-type cytochromes. Transiently binds heme delivered by CcmC and transfers the heme to apo-cytochromes in a process facilitated by CcmF and CcmH. The sequence is that of Cytochrome c-type biogenesis protein CcmE from Aromatoleum aromaticum (strain DSM 19018 / LMG 30748 / EbN1) (Azoarcus sp. (strain EbN1)).